A 388-amino-acid chain; its full sequence is Succinate--CoA ligase [ADP-forming] subunit beta (388 aa).

The 236-residue stretch at Lys9 to His244 folds into the ATP-grasp domain. ATP is bound by residues Lys46, Gly53–Gly55, Glu99, Thr102, and Glu107. Asn199 and Asp213 together coordinate Mg(2+). Substrate-binding positions include Asn264 and Gly321–Val323.

This sequence belongs to the succinate/malate CoA ligase beta subunit family. Heterotetramer of two alpha and two beta subunits. Requires Mg(2+) as cofactor.

It carries out the reaction succinate + ATP + CoA = succinyl-CoA + ADP + phosphate. The catalysed reaction is GTP + succinate + CoA = succinyl-CoA + GDP + phosphate. The protein operates within carbohydrate metabolism; tricarboxylic acid cycle; succinate from succinyl-CoA (ligase route): step 1/1. Functionally, succinyl-CoA synthetase functions in the citric acid cycle (TCA), coupling the hydrolysis of succinyl-CoA to the synthesis of either ATP or GTP and thus represents the only step of substrate-level phosphorylation in the TCA. The beta subunit provides nucleotide specificity of the enzyme and binds the substrate succinate, while the binding sites for coenzyme A and phosphate are found in the alpha subunit. This is Succinate--CoA ligase [ADP-forming] subunit beta from Pseudoalteromonas translucida (strain TAC 125).